Consider the following 354-residue polypeptide: Ferrochelatase (354 aa).

Fe cation-binding residues include H204 and E306.

It belongs to the ferrochelatase family.

Its subcellular location is the cytoplasm. The enzyme catalyses heme b + 2 H(+) = protoporphyrin IX + Fe(2+). The protein operates within porphyrin-containing compound metabolism; protoheme biosynthesis; protoheme from protoporphyrin-IX: step 1/1. Catalyzes the ferrous insertion into protoporphyrin IX. The protein is Ferrochelatase of Coxiella burnetii (strain CbuG_Q212) (Coxiella burnetii (strain Q212)).